Here is a 209-residue protein sequence, read N- to C-terminus: Phosphopantothenoylcysteine decarboxylase (209 aa).

FMN-binding positions include 28–30 (GSV) and 53–55 (TKS). The active-site Proton donor is the histidine 90. Residues 106 to 109 (SANT) and alanine 140 contribute to the FMN site. The N-[(R)-4-phosphopantothenoyl]-L-cysteine site is built by asparagine 142, arginine 172, and alanine 174. The active-site Proton donor is the cysteine 175. Methionine 183 contributes to the N-[(R)-4-phosphopantothenoyl]-L-cysteine binding site.

This sequence belongs to the HFCD (homooligomeric flavin containing Cys decarboxylase) superfamily. Homotrimer. The cofactor is FMN. As to expression, expressed in roots, shoots, leaves, flowers, developing siliques and seeds with highest expression in seed embryos and phloem.

It catalyses the reaction N-[(R)-4-phosphopantothenoyl]-L-cysteine + H(+) = (R)-4'-phosphopantetheine + CO2. Its pathway is cofactor biosynthesis; coenzyme A biosynthesis; CoA from (R)-pantothenate: step 3/5. Its function is as follows. Involved in plant growth, and salt and osmotic tolerance. Catalyzes the decarboxylation of 4'-phosphopantothenoylcysteine to 4'-phosphopantetheine, a key step in coenzyme A biosynthesis. The enzyme is also able to decarboxylate pantothenoylcysteine to pantothenoylcysteamine. This is Phosphopantothenoylcysteine decarboxylase from Arabidopsis thaliana (Mouse-ear cress).